The chain runs to 182 residues: MKYFEKRFLDVYRPLYIGVIFLGIILDLVTKFLVILYFEPHRYLEVLGSFFRMTLTFNTGFVFGAFQDNAIPSLIATGIAIVFLIGYRWKNYDLGNPWGWNLVMAGAFGNFLDKFFVKIPGTGFRFGFQPNVGEYIGVVDFLDFDWPDFLLFSRWPAFNVADSCVTIGLTILIFTMKLEEEK.

4 helical membrane passes run 15-35 (LYIG…FLVI), 44-64 (LEVL…FVFG), 65-85 (AFQD…VFLI), and 97-117 (PWGW…KFFV). Active-site residues include Asp140 and Asp162. The helical transmembrane segment at 155–175 (WPAFNVADSCVTIGLTILIFT) threads the bilayer.

It belongs to the peptidase A8 family.

The protein localises to the cell inner membrane. It catalyses the reaction Release of signal peptides from bacterial membrane prolipoproteins. Hydrolyzes -Xaa-Yaa-Zaa-|-(S,diacylglyceryl)Cys-, in which Xaa is hydrophobic (preferably Leu), and Yaa (Ala or Ser) and Zaa (Gly or Ala) have small, neutral side chains.. Its pathway is protein modification; lipoprotein biosynthesis (signal peptide cleavage). Its function is as follows. This protein specifically catalyzes the removal of signal peptides from prolipoproteins. This chain is Lipoprotein signal peptidase, found in Leptospira borgpetersenii serovar Hardjo-bovis (strain L550).